A 161-amino-acid polypeptide reads, in one-letter code: Nucleotide-binding protein Sfri_0732 (161 aa).

It belongs to the YajQ family.

Functionally, nucleotide-binding protein. The sequence is that of Nucleotide-binding protein Sfri_0732 from Shewanella frigidimarina (strain NCIMB 400).